The primary structure comprises 320 residues: Aspartate carbamoyltransferase catalytic subunit (320 aa).

Residues Arg-53 and Thr-54 each contribute to the carbamoyl phosphate site. L-aspartate is bound at residue Lys-82. Positions 103, 131, and 134 each coordinate carbamoyl phosphate. L-aspartate is bound by residues Arg-164 and Arg-227. Carbamoyl phosphate contacts are provided by Leu-266 and Pro-267.

The protein belongs to the aspartate/ornithine carbamoyltransferase superfamily. ATCase family. As to quaternary structure, heterododecamer (2C3:3R2) of six catalytic PyrB chains organized as two trimers (C3), and six regulatory PyrI chains organized as three dimers (R2).

The catalysed reaction is carbamoyl phosphate + L-aspartate = N-carbamoyl-L-aspartate + phosphate + H(+). Its pathway is pyrimidine metabolism; UMP biosynthesis via de novo pathway; (S)-dihydroorotate from bicarbonate: step 2/3. Its function is as follows. Catalyzes the condensation of carbamoyl phosphate and aspartate to form carbamoyl aspartate and inorganic phosphate, the committed step in the de novo pyrimidine nucleotide biosynthesis pathway. The chain is Aspartate carbamoyltransferase catalytic subunit from Bifidobacterium adolescentis (strain ATCC 15703 / DSM 20083 / NCTC 11814 / E194a).